Here is a 138-residue protein sequence, read N- to C-terminus: Basic phospholipase A2 PLA-B' (138 aa).

Positions 1–16 (MRTLWITAVLLVGVEG) are cleaved as a signal peptide. Cystine bridges form between cysteine 42-cysteine 131, cysteine 44-cysteine 60, cysteine 59-cysteine 111, cysteine 65-cysteine 138, cysteine 66-cysteine 104, cysteine 73-cysteine 97, and cysteine 91-cysteine 102. Tyrosine 43, glycine 45, and glycine 47 together coordinate Ca(2+). Histidine 63 is an active-site residue. Aspartate 64 lines the Ca(2+) pocket. Aspartate 105 is a catalytic residue.

This sequence belongs to the phospholipase A2 family. Group II subfamily. D49 sub-subfamily. The cofactor is Ca(2+). Expressed by the venom gland.

It is found in the secreted. The enzyme catalyses a 1,2-diacyl-sn-glycero-3-phosphocholine + H2O = a 1-acyl-sn-glycero-3-phosphocholine + a fatty acid + H(+). PLA2 catalyzes the calcium-dependent hydrolysis of the 2-acyl groups in 3-sn-phosphoglycerides. In Protobothrops flavoviridis (Habu), this protein is Basic phospholipase A2 PLA-B'.